Reading from the N-terminus, the 398-residue chain is Phosphoglycerate kinase (398 aa).

Substrate-binding positions include 23 to 25 (DFN), R38, 61 to 64 (HMGK), R122, and R155. ATP is bound by residues K206, G297, E328, and 354 to 357 (GGDS).

It belongs to the phosphoglycerate kinase family. As to quaternary structure, monomer.

Its subcellular location is the cytoplasm. The enzyme catalyses (2R)-3-phosphoglycerate + ATP = (2R)-3-phospho-glyceroyl phosphate + ADP. It functions in the pathway carbohydrate degradation; glycolysis; pyruvate from D-glyceraldehyde 3-phosphate: step 2/5. The polypeptide is Phosphoglycerate kinase (Clostridium botulinum (strain Langeland / NCTC 10281 / Type F)).